The chain runs to 523 residues: Alpha,alpha-trehalose-phosphate synthase [UDP-forming] (523 aa).

D-glucose 6-phosphate is bound by residues Tyr-98 and Asp-152. Residues Arg-288 and Lys-293 each coordinate UDP. UDP-alpha-D-glucose is bound by residues Arg-288 and Lys-293. Arg-326 serves as a coordination point for D-glucose 6-phosphate. UDP-alpha-D-glucose is bound at residue 387 to 395 (DGMNLVSYE). 391–395 (LVSYE) lines the UDP pocket. The disordered stretch occupies residues 503 to 523 (QQFNLGEQREEGRLEPGEFDD). A compositionally biased stretch (basic and acidic residues) spans 509–523 (EQREEGRLEPGEFDD).

This sequence belongs to the glycosyltransferase 20 family.

It catalyses the reaction D-glucose 6-phosphate + UDP-alpha-D-glucose = alpha,alpha-trehalose 6-phosphate + UDP + H(+). It functions in the pathway carbohydrate biosynthesis. Synthase catalytic subunit of the trehalose synthase complex that catalyzes the production of trehalose from glucose-6-phosphate and UDP-alpha-D-glucose in a two step process. The disaccharide trehalose serves as a storage carbohydrate that is mobilized during conidial germination. Trehalose also serves as a protectant for cell integrity during stress. This is Alpha,alpha-trehalose-phosphate synthase [UDP-forming] from Botryotinia fuckeliana (strain B05.10) (Noble rot fungus).